We begin with the raw amino-acid sequence, 175 residues long: Large ribosomal subunit protein uL22 (175 aa).

Residues 113-175 (VESRPVKDQR…EASETKGGSD (63 aa)) form a disordered region. Over residues 136 to 154 (KTAGRAPAKKAGASSGATK) the composition is skewed to low complexity. Over residues 166 to 175 (EASETKGGSD) the composition is skewed to basic and acidic residues.

The protein belongs to the universal ribosomal protein uL22 family. Part of the 50S ribosomal subunit.

Its function is as follows. This protein binds specifically to 23S rRNA; its binding is stimulated by other ribosomal proteins, e.g. L4, L17, and L20. It is important during the early stages of 50S assembly. It makes multiple contacts with different domains of the 23S rRNA in the assembled 50S subunit and ribosome. Functionally, the globular domain of the protein is located near the polypeptide exit tunnel on the outside of the subunit, while an extended beta-hairpin is found that lines the wall of the exit tunnel in the center of the 70S ribosome. The chain is Large ribosomal subunit protein uL22 from Mycobacterium leprae (strain TN).